A 454-amino-acid polypeptide reads, in one-letter code: UDP-N-acetylmuramate--L-alanine ligase (454 aa).

Glycine 113 to threonine 119 lines the ATP pocket.

The protein belongs to the MurCDEF family.

Its subcellular location is the cytoplasm. It carries out the reaction UDP-N-acetyl-alpha-D-muramate + L-alanine + ATP = UDP-N-acetyl-alpha-D-muramoyl-L-alanine + ADP + phosphate + H(+). It participates in cell wall biogenesis; peptidoglycan biosynthesis. Cell wall formation. The protein is UDP-N-acetylmuramate--L-alanine ligase of Sulfurihydrogenibium sp. (strain YO3AOP1).